A 278-amino-acid chain; its full sequence is Rhomboid protease GlpG (278 aa).

6 helical membrane-spanning segments follow: residues 94-114, 143-163, 175-195, 196-216, 224-241, and 245-267; these read AGPL…LMLI, AFLH…WYLG, LLVL…LFSG, ANFG…WLTG, ISLP…LIAG, and ILGL…LMAF. Ser202 serves as the catalytic Nucleophile. Residue His255 is part of the active site.

This sequence belongs to the peptidase S54 family.

It localises to the cell inner membrane. The catalysed reaction is Cleaves type-1 transmembrane domains using a catalytic dyad composed of serine and histidine that are contributed by different transmembrane domains.. In terms of biological role, rhomboid-type serine protease that catalyzes intramembrane proteolysis. This chain is Rhomboid protease GlpG, found in Yersinia pestis bv. Antiqua (strain Antiqua).